Consider the following 465-residue polypeptide: Pancreatic triacylglycerol lipase (465 aa).

The signal sequence occupies residues 1–16 (MLLVWSLALLLGAVAG). 2 cysteine pairs are disulfide-bonded: Cys20–Cys26 and Cys107–Cys118. Ser169 acts as the Nucleophile in catalysis. Asp193 functions as the Charge relay system in the catalytic mechanism. Residues Glu204, Arg207, Asp209, and Asp212 each coordinate Ca(2+). An intrachain disulfide couples Cys254 to Cys278. The active-site Charge relay system is His280. Disulfide bonds link Cys302–Cys313, Cys316–Cys321, and Cys449–Cys465. The PLAT domain occupies 355–465 (WRYKVSVTLS…EDVLLTLNAC (111 aa)).

This sequence belongs to the AB hydrolase superfamily. Lipase family. Forms a 1:1 stoichiometric complex with (pro)colipase/CLPS. Expressed in many tissues with highest expression in liver. During hibernation there is a significant increases in expression in heart, white adipose tissue (WAT), and testis; but not in pancreas.

Its subcellular location is the secreted. The enzyme catalyses a triacylglycerol + H2O = a diacylglycerol + a fatty acid + H(+). It catalyses the reaction 1,2,3-tributanoylglycerol + H2O = dibutanoylglycerol + butanoate + H(+). It carries out the reaction 1,2,3-tri-(9Z-octadecenoyl)-glycerol + H2O = di-(9Z)-octadecenoylglycerol + (9Z)-octadecenoate + H(+). The catalysed reaction is all-trans-retinyl hexadecanoate + H2O = all-trans-retinol + hexadecanoate + H(+). The enzyme catalyses 1,2-di-(9Z-octadecenoyl)-glycerol + H2O = (9Z-octadecenoyl)-glycerol + (9Z)-octadecenoate + H(+). With respect to regulation, inhibited by bile salts, is reactivated by (pro)colipase/CLPS. Plays an important role in fat metabolism. It preferentially splits the esters of long-chain fatty acids at positions 1 and 3, producing mainly 2-monoacylglycerol and free fatty acids, and shows considerably higher activity against insoluble emulsified substrates than against soluble ones. Plays a role in hibernation as a key enzyme that shows high activity at low temperatures. When expressed in the hibernating heart it liberates fatty acids from triglycerides at temperatures as low as 0 degrees Celsius. This chain is Pancreatic triacylglycerol lipase (PNLIP), found in Ictidomys tridecemlineatus (Thirteen-lined ground squirrel).